A 130-amino-acid chain; its full sequence is Small ribosomal subunit protein uS8 (130 aa).

It belongs to the universal ribosomal protein uS8 family. As to quaternary structure, part of the 30S ribosomal subunit.

One of the primary rRNA binding proteins, it binds directly to 16S rRNA central domain where it helps coordinate assembly of the platform of the 30S subunit. The polypeptide is Small ribosomal subunit protein uS8 (Haloquadratum walsbyi (strain DSM 16790 / HBSQ001)).